A 609-amino-acid polypeptide reads, in one-letter code: Heat shock factor protein (609 aa).

Over residues M1–N33 the composition is skewed to polar residues. A disordered region spans residues M1–N47. Low complexity predominate over residues S34–S45. A DNA-binding region spans residues I50–A156. 4 disordered regions span residues P255–R298, S310–K371, N411–Q445, and S567–A609. Composition is skewed to polar residues over residues V257 to N277, D339 to P360, Y422 to P443, and S567 to R597. Position 350 is a phosphoserine (S350). Basic residues predominate over residues Q598–A609.

It belongs to the HSF family. Homotrimer.

The protein resides in the nucleus. Its function is as follows. DNA-binding protein that specifically binds heat shock promoter elements (HSE) and activates transcription. Also required for growth at normal temperatures. The protein is Heat shock factor protein (hsf1) of Schizosaccharomyces pombe (strain 972 / ATCC 24843) (Fission yeast).